The following is a 223-amino-acid chain: RNA polymerase sigma-H factor (223 aa).

Residues 67–80 carry the Polymerase core binding motif; the sequence is DIVQEGMIGLYKSI. The segment at residues 187–206 is a DNA-binding region (H-T-H motif); sequence YQEISEELNRHVKSIDNALQ.

Belongs to the sigma-70 factor family.

Sigma factors are initiation factors that promote the attachment of RNA polymerase to specific initiation sites and are then released. This sigma factor is involved in the transition to post-exponential phase in the beginning of sporulation. In Bacillus licheniformis, this protein is RNA polymerase sigma-H factor (sigH).